We begin with the raw amino-acid sequence, 270 residues long: SPbeta prophage-derived DNA ligase-like protein LigB (270 aa).

Catalysis depends on lysine 25, which acts as the N6-AMP-lysine intermediate.

It belongs to the ATP-dependent DNA ligase family.

This is SPbeta prophage-derived DNA ligase-like protein LigB (ligB) from Bacillus subtilis (strain 168).